Reading from the N-terminus, the 229-residue chain is Cytidylate kinase (229 aa).

12 to 20 (GPSGAGKGT) is an ATP binding site.

It belongs to the cytidylate kinase family. Type 1 subfamily.

The protein localises to the cytoplasm. It catalyses the reaction CMP + ATP = CDP + ADP. The catalysed reaction is dCMP + ATP = dCDP + ADP. In Shewanella frigidimarina (strain NCIMB 400), this protein is Cytidylate kinase.